A 455-amino-acid chain; its full sequence is Phosphoglycerate kinase, glycosomal (455 aa).

(2R)-3-phosphoglycerate-binding residues include Val23, Asp24, Phe25, Asn26, Arg39, Ser61, His62, Gly64, Arg65, Arg132, His168, and Arg169. Positions 214 and 215 each coordinate ADP. Gly214 provides a ligand contact to CDP. AMP is bound by residues Ala215 and Lys216. An ATP-binding site is contributed by Ala215. Ala215 provides a ligand contact to Mg(2+). (2R)-3-phosphoglycerate is bound at residue Lys216. A CDP-binding site is contributed by Asp219. Position 219 (Asp219) interacts with Mg(2+). ADP-binding residues include Lys220 and Gly238. Lys220 lines the AMP pocket. Lys220 provides a ligand contact to ATP. Gly238 is a CDP binding site. AMP-binding residues include Ala239 and Ala311. Positions 239 and 311 each coordinate ATP. ADP is bound by residues Ala311 and Asn335. 2 residues coordinate CDP: Gly336 and Phe341. ADP is bound by residues Phe341, Glu342, Asp374, and Thr375. Position 342 (Glu342) interacts with AMP. Glu342, Asp374, and Thr375 together coordinate ATP. Asp374 serves as a coordination point for Mg(2+). The interval 417–455 is topogenic signal; the sequence is DAKAPAAAAAAGGDCPCGSGCAAVPAAATATVSMVLASP.

The protein belongs to the phosphoglycerate kinase family. As to quaternary structure, monomer. Mg(2+) serves as cofactor.

The protein resides in the glycosome. It carries out the reaction (2R)-3-phosphoglycerate + ATP = (2R)-3-phospho-glyceroyl phosphate + ADP. The protein operates within carbohydrate degradation; glycolysis; pyruvate from D-glyceraldehyde 3-phosphate: step 2/5. The sequence is that of Phosphoglycerate kinase, glycosomal (PGKC) from Crithidia fasciculata.